We begin with the raw amino-acid sequence, 126 residues long: DNA-directed RNA polymerase subunit omega (126 aa).

It belongs to the RNA polymerase subunit omega family. In terms of assembly, the RNAP catalytic core consists of 2 alpha, 1 beta, 1 beta' and 1 omega subunit. When a sigma factor is associated with the core the holoenzyme is formed, which can initiate transcription.

The enzyme catalyses RNA(n) + a ribonucleoside 5'-triphosphate = RNA(n+1) + diphosphate. Promotes RNA polymerase assembly. Latches the N- and C-terminal regions of the beta' subunit thereby facilitating its interaction with the beta and alpha subunits. The sequence is that of DNA-directed RNA polymerase subunit omega from Paramagnetospirillum magneticum (strain ATCC 700264 / AMB-1) (Magnetospirillum magneticum).